The following is an 827-amino-acid chain: Beta-galactosidase 2 (827 aa).

Positions 1 to 24 are cleaved as a signal peptide; the sequence is MAASAVAVAFVVAVAAVLAAAASA. The active-site Proton donor is E182. N-linked (GlcNAc...) asparagine glycosylation is present at N209. The active-site Nucleophile is E251. An N-linked (GlcNAc...) asparagine glycan is attached at N458. The SUEL-type lectin domain occupies 741 to 827; that stretch reads DYEKAKVHLQ…KRAVVEAICG (87 aa).

It belongs to the glycosyl hydrolase 35 family.

It is found in the secreted. Its subcellular location is the extracellular space. The protein localises to the apoplast. It catalyses the reaction Hydrolysis of terminal non-reducing beta-D-galactose residues in beta-D-galactosides.. This is Beta-galactosidase 2 from Oryza sativa subsp. japonica (Rice).